The chain runs to 88 residues: uncharacterized protein (88 aa).

It belongs to the phD/YefM antitoxin family.

This is an uncharacterized protein from Sinorhizobium fredii (strain NBRC 101917 / NGR234).